The following is a 356-amino-acid chain: Replication factor C subunit 3 (356 aa).

K20 carries the post-translational modification N6-acetyllysine. Position 125 is a phosphoserine (S125).

Belongs to the activator 1 small subunits family. As to quaternary structure, subunit of the RFC complex, an heteropentameric complex consisting of a large subunit RFC1 and four small subunits RFC2, RFC3, RFC4 and RFC5; the RFC complex interacts with PCNA. Forms an heterotetrameric complex with RFC2, RFC4 and RFC5; this complex has ATPase activity but is not stimulated by PCNA. The heterotetramer of subunits RFC2, RFC3, RFC4 and RFC5 interacts with RAD17. Interacts with CNTD1; this interaction facilitates crossover formation.

It localises to the nucleus. In terms of biological role, subunit of the replication factor C (RFC) complex which acts during elongation of primed DNA templates by DNA polymerases delta and epsilon, and is necessary for ATP-dependent loading of proliferating cell nuclear antigen (PCNA) onto primed DNA. The polypeptide is Replication factor C subunit 3 (RFC3) (Bos taurus (Bovine)).